Consider the following 539-residue polypeptide: Chloride channel CLIC-like protein 1 (539 aa).

The first 18 residues, 1 to 18 (MLCRLLLCECLLLITGYA), serve as a signal peptide directing secretion. Residues 19-184 (HDDDWIDPTD…EDYFGVDPYN (166 aa)) are Lumenal-facing. Positions 41–61 (KSQVRSGTSEKKEVSPDSSEA) are disordered. A helical transmembrane segment spans residues 185–205 (VFMVLLCLLCLVVLVATELWT). Residues 206–215 (YVRWYTQMKR) are Cytoplasmic-facing. The chain crosses the membrane as a helical span at residues 216–236 (IFIISFLLSLAWNWIYLYKMA). Residues 237–329 (FAQHQANIAG…GEFIKALMKE (93 aa)) lie on the Lumenal side of the membrane. The helical transmembrane segment at 330-350 (IPVLLQIPVLAILALAVLSFC) threads the bilayer. The Cytoplasmic segment spans residues 351-539 (YGAGRSVPML…GTEPVSSPCG (189 aa)). A disordered region spans residues 361 to 410 (RHFGGPDREPPRALEPDDRRRQKGLDYRLHGGAGDADFSYRGPAGSIEQG). A compositionally biased stretch (basic and acidic residues) spans 364–389 (GGPDREPPRALEPDDRRRQKGLDYRL). A phosphoserine mark is found at S429, S433, and S459. The segment at 444–539 (DTEAQEHPEV…GTEPVSSPCG (96 aa)) is disordered. The segment covering 475–485 (STPTEYSQSAK) has biased composition (polar residues). T476 is modified (phosphothreonine). 3 positions are modified to phosphoserine: S498, S513, and S521. The span at 512-521 (CSPPGGCPPS) shows a compositional bias: low complexity.

Belongs to the chloride channel MCLC family. In terms of assembly, homomultimers. Interacts with mitochondrial protein PIGBOS1 (via C-terminus); the interaction occurs at the mitochondria-associated endoplasmic reticulum (ER) membrane, a zone of contact between the ER and mitochondrial membranes, but does not appear to play a role in ER-mitochondria tethering and is not affected by ER stress. Interacts with CALR. In terms of tissue distribution, expressed in cerebellum (at protein level).

The protein resides in the endoplasmic reticulum membrane. The catalysed reaction is chloride(in) = chloride(out). The enzyme catalyses bromide(in) = bromide(out). It catalyses the reaction nitrate(in) = nitrate(out). It carries out the reaction fluoride(in) = fluoride(out). Its activity is regulated as follows. Activated by membrane phosphatidylinositol 4,5-bisphosphate (PI(4,5)P2, PIP2). Inhibited by lumenal Ca(2+). Anion-selective channel with Ca(2+)-dependent and voltage-independent gating. Permeable to small monovalent anions with selectivity for bromide &gt; chloride &gt; nitrate &gt; fluoride. Operates in the endoplasmic reticulum (ER) membrane where it mediates chloride efflux to compensate for the loss of positive charges from the ER lumen upon Ca(2+) release. Contributes to the maintenance of ER Ca(2+) pools and activation of unfolded protein response to prevent accumulation of misfolded proteins in the ER lumen. Particularly involved in ER homeostasis mechanisms underlying motor neurons and retinal photoreceptors survival. The chain is Chloride channel CLIC-like protein 1 from Mus musculus (Mouse).